Here is a 102-residue protein sequence, read N- to C-terminus: Ferredoxin (102 aa).

4Fe-4S ferredoxin-type domains follow at residues 45–73 (VSVN…ELVE) and 74–102 (TWIE…EVMK). C54, C57, C60, C64, C83, C86, C89, and C93 together coordinate [4Fe-4S] cluster.

The cofactor is [4Fe-4S] cluster.

It functions in the pathway membrane lipid metabolism; glycerophospholipid metabolism. Ferredoxin that is the specific electron donor for the geranylgeranyl reductase GGR involved in the biosynthesis of archaeal membrane lipids. This chain is Ferredoxin, found in Methanosarcina acetivorans (strain ATCC 35395 / DSM 2834 / JCM 12185 / C2A).